An 86-amino-acid chain; its full sequence is Anti-adapter protein IraP (86 aa).

The stretch at 1–36 (MKNLIAELLLKLAQKEEESKELCAQVEALEIIVTAM) forms a coiled coil.

The protein belongs to the IraP family. In terms of assembly, interacts with RssB.

Its subcellular location is the cytoplasm. In terms of biological role, inhibits RpoS proteolysis by regulating RssB activity, thereby increasing the stability of the sigma stress factor RpoS especially during phosphate starvation, but also in stationary phase and during nitrogen starvation. Its effect on RpoS stability is due to its interaction with RssB, which probably blocks the interaction of RssB with RpoS, and the consequent delivery of the RssB-RpoS complex to the ClpXP protein degradation pathway. The protein is Anti-adapter protein IraP of Shigella boydii serotype 4 (strain Sb227).